The following is a 419-amino-acid chain: 5-methylthioadenosine/S-adenosylhomocysteine deaminase (419 aa).

Positions 58 and 60 each coordinate Zn(2+). Residues Glu-87 and His-179 each coordinate substrate. His-206 is a Zn(2+) binding site. Positions 209 and 294 each coordinate substrate. Asp-294 serves as a coordination point for Zn(2+).

This sequence belongs to the metallo-dependent hydrolases superfamily. MTA/SAH deaminase family. It depends on Zn(2+) as a cofactor.

It carries out the reaction S-adenosyl-L-homocysteine + H2O + H(+) = S-inosyl-L-homocysteine + NH4(+). The enzyme catalyses S-methyl-5'-thioadenosine + H2O + H(+) = S-methyl-5'-thioinosine + NH4(+). Functionally, catalyzes the deamination of 5-methylthioadenosine and S-adenosyl-L-homocysteine into 5-methylthioinosine and S-inosyl-L-homocysteine, respectively. Is also able to deaminate adenosine. This Pyrococcus furiosus (strain ATCC 43587 / DSM 3638 / JCM 8422 / Vc1) protein is 5-methylthioadenosine/S-adenosylhomocysteine deaminase.